The sequence spans 247 residues: Probable dihydroorotate dehydrogenase B (NAD(+)), electron transfer subunit (247 aa).

The FAD-binding FR-type domain maps to 1 to 87 (MLRRVTLKET…RGPYGNGFKE (87 aa)). Residues Cys-200, Cys-205, Cys-208, and Cys-216 each coordinate [2Fe-2S] cluster.

Belongs to the PyrK family. As to quaternary structure, heterotetramer of 2 PyrK and 2 PyrD type B subunits. The cofactor is [2Fe-2S] cluster. FAD serves as cofactor.

Its pathway is pyrimidine metabolism; UMP biosynthesis via de novo pathway; orotate from (S)-dihydroorotate (NAD(+) route): step 1/1. Its function is as follows. Responsible for channeling the electrons from the oxidation of dihydroorotate from the FMN redox center in the PyrD type B subunit to the ultimate electron acceptor NAD(+). The protein is Probable dihydroorotate dehydrogenase B (NAD(+)), electron transfer subunit of Pyrococcus horikoshii (strain ATCC 700860 / DSM 12428 / JCM 9974 / NBRC 100139 / OT-3).